The chain runs to 245 residues: 5-oxoprolinase subunit A (245 aa).

Belongs to the LamB/PxpA family. As to quaternary structure, forms a complex composed of PxpA, PxpB and PxpC.

It catalyses the reaction 5-oxo-L-proline + ATP + 2 H2O = L-glutamate + ADP + phosphate + H(+). Functionally, catalyzes the cleavage of 5-oxoproline to form L-glutamate coupled to the hydrolysis of ATP to ADP and inorganic phosphate. The chain is 5-oxoprolinase subunit A from Chromobacterium violaceum (strain ATCC 12472 / DSM 30191 / JCM 1249 / CCUG 213 / NBRC 12614 / NCIMB 9131 / NCTC 9757 / MK).